The chain runs to 230 residues: 6-carboxyhexanoate--CoA ligase (230 aa).

This sequence belongs to the BioW family. In terms of assembly, homodimer. Mg(2+) is required as a cofactor.

The catalysed reaction is heptanedioate + ATP + CoA = 6-carboxyhexanoyl-CoA + AMP + diphosphate. The protein operates within metabolic intermediate metabolism; pimeloyl-CoA biosynthesis; pimeloyl-CoA from pimelate: step 1/1. Its function is as follows. Catalyzes the transformation of pimelate into pimeloyl-CoA with concomitant hydrolysis of ATP to AMP. The chain is 6-carboxyhexanoate--CoA ligase from Staphylococcus aureus (strain MSSA476).